The following is a 259-amino-acid chain: Ubiquinone/menaquinone biosynthesis C-methyltransferase UbiE (259 aa).

S-adenosyl-L-methionine contacts are provided by residues Thr82, Asp103, and 131 to 132; that span reads NA.

It belongs to the class I-like SAM-binding methyltransferase superfamily. MenG/UbiE family.

The enzyme catalyses a 2-demethylmenaquinol + S-adenosyl-L-methionine = a menaquinol + S-adenosyl-L-homocysteine + H(+). The catalysed reaction is a 2-methoxy-6-(all-trans-polyprenyl)benzene-1,4-diol + S-adenosyl-L-methionine = a 5-methoxy-2-methyl-3-(all-trans-polyprenyl)benzene-1,4-diol + S-adenosyl-L-homocysteine + H(+). Its pathway is quinol/quinone metabolism; menaquinone biosynthesis; menaquinol from 1,4-dihydroxy-2-naphthoate: step 2/2. It functions in the pathway cofactor biosynthesis; ubiquinone biosynthesis. Methyltransferase required for the conversion of demethylmenaquinol (DMKH2) to menaquinol (MKH2) and the conversion of 2-polyprenyl-6-methoxy-1,4-benzoquinol (DDMQH2) to 2-polyprenyl-3-methyl-6-methoxy-1,4-benzoquinol (DMQH2). The protein is Ubiquinone/menaquinone biosynthesis C-methyltransferase UbiE of Agrobacterium fabrum (strain C58 / ATCC 33970) (Agrobacterium tumefaciens (strain C58)).